A 365-amino-acid polypeptide reads, in one-letter code: Chorismate synthase (365 aa).

Residue Arg48 coordinates NADP(+). FMN-binding positions include 125-127 (RSS), 238-239 (NA), Gly278, 293-297 (KPTSS), and Arg319.

It belongs to the chorismate synthase family. As to quaternary structure, homotetramer. FMNH2 is required as a cofactor.

It catalyses the reaction 5-O-(1-carboxyvinyl)-3-phosphoshikimate = chorismate + phosphate. The protein operates within metabolic intermediate biosynthesis; chorismate biosynthesis; chorismate from D-erythrose 4-phosphate and phosphoenolpyruvate: step 7/7. Its function is as follows. Catalyzes the anti-1,4-elimination of the C-3 phosphate and the C-6 proR hydrogen from 5-enolpyruvylshikimate-3-phosphate (EPSP) to yield chorismate, which is the branch point compound that serves as the starting substrate for the three terminal pathways of aromatic amino acid biosynthesis. This reaction introduces a second double bond into the aromatic ring system. In Ruthia magnifica subsp. Calyptogena magnifica, this protein is Chorismate synthase.